Here is a 125-residue protein sequence, read N- to C-terminus: Glycine cleavage system H protein (125 aa).

Positions 21–103 constitute a Lipoyl-binding domain; sequence SVTIGISNQA…YSAGWIVKIK (83 aa). Lys-62 carries the post-translational modification N6-lipoyllysine.

This sequence belongs to the GcvH family. As to quaternary structure, the glycine cleavage system is composed of four proteins: P, T, L and H. Requires (R)-lipoate as cofactor.

Its function is as follows. The glycine cleavage system catalyzes the degradation of glycine. The H protein shuttles the methylamine group of glycine from the P protein to the T protein. The sequence is that of Glycine cleavage system H protein from Psychromonas ingrahamii (strain DSM 17664 / CCUG 51855 / 37).